The following is a 462-amino-acid chain: CUGBP Elav-like family member 3-B (462 aa).

RRM domains are found at residues 7–88 (IKLF…PADS), 95–175 (RKLF…FADT), and 377–455 (CNIF…LKRP).

The protein belongs to the CELF/BRUNOL family.

The protein localises to the nucleus. Its subcellular location is the cytoplasm. Its function is as follows. RNA-binding protein that may be involved in the regulation of pre-mRNA alternative splicing. In Xenopus laevis (African clawed frog), this protein is CUGBP Elav-like family member 3-B (tnrc4-b).